Consider the following 370-residue polypeptide: Fe(2+) transport protein 2 (370 aa).

An N-terminal signal peptide occupies residues 1–25 (MMMSSSQTPVRIAFVFLVILAATDA). Residues 26–55 (HSDHRTPPPACGGAAVGGECHSVARALRLK) lie on the Extracellular side of the membrane. A helical membrane pass occupies residues 56-76 (LIAIPAILAASVAGVCLPLFA). Residues 77–85 (RSVPALRPD) lie on the Cytoplasmic side of the membrane. The helical transmembrane segment at 86–106 (GGLFAVVKAFASGVILGTGYM) threads the bilayer. The Extracellular segment spans residues 107–130 (HVLPDSFNDLTSPCLPRKPWSEFP). The helical transmembrane segment at 131 to 151 (FAAFVAMLAAVFTLMVDSLML) threads the bilayer. The Cytoplasmic segment spans residues 152 to 215 (TFHTRGSKGR…TTKAQLLRNR (64 aa)). A helical transmembrane segment spans residues 216 to 236 (VIVQVLEMGIVVHSVVIGLGM). Residues 237–247 (GASQNVCTIRP) are Extracellular-facing. Residues 248-268 (LVAALCFHQMFEGMGLGGCIL) form a helical membrane-spanning segment. Residues 269–278 (QAGYGGRTRS) lie on the Cytoplasmic side of the membrane. A helical membrane pass occupies residues 279–299 (ALVFFFSTTTPFGIALGLALT). The Extracellular portion of the chain corresponds to 300–309 (RVYSDSSPTA). A helical membrane pass occupies residues 310–330 (LVVVGLLNAASAGLLHYMALV). Residues 331–349 (ELLAADFMGPKLQGNVRLQ) are Cytoplasmic-facing. A helical transmembrane segment spans residues 350-370 (LAASLAILLGAGGMSVMAKWA).

The protein belongs to the ZIP transporter (TC 2.A.5) family.

The protein resides in the cell membrane. Functionally, iron transporter that may play a role in the uptake of iron from the rhizosphere across the plasma membrane in the root epidermal layer. In Oryza sativa subsp. japonica (Rice), this protein is Fe(2+) transport protein 2 (IRT2).